A 397-amino-acid chain; its full sequence is Acetate kinase (397 aa).

Residue Asn-7 participates in Mg(2+) binding. Lys-14 lines the ATP pocket. Arg-90 provides a ligand contact to substrate. The Proton donor/acceptor role is filled by Asp-147. ATP is bound by residues 207–211 (HLGNG), 282–284 (DFR), and 330–334 (GLGEN). Glu-383 contributes to the Mg(2+) binding site.

This sequence belongs to the acetokinase family. Homodimer. The cofactor is Mg(2+). Mn(2+) is required as a cofactor.

It is found in the cytoplasm. It carries out the reaction acetate + ATP = acetyl phosphate + ADP. It participates in metabolic intermediate biosynthesis; acetyl-CoA biosynthesis; acetyl-CoA from acetate: step 1/2. Its function is as follows. Catalyzes the formation of acetyl phosphate from acetate and ATP. Can also catalyze the reverse reaction. In Clostridium botulinum (strain Loch Maree / Type A3), this protein is Acetate kinase.